A 161-amino-acid polypeptide reads, in one-letter code: Phosphopantetheine adenylyltransferase (161 aa).

Ser-11 serves as a coordination point for substrate. ATP is bound by residues 11-12 (SF) and His-19. Positions 43, 75, and 89 each coordinate substrate. Residues 90-92 (GLR), Glu-100, and 125-131 (YSYLSSS) each bind ATP.

It belongs to the bacterial CoaD family. As to quaternary structure, homohexamer. Requires Mg(2+) as cofactor.

The protein resides in the cytoplasm. The catalysed reaction is (R)-4'-phosphopantetheine + ATP + H(+) = 3'-dephospho-CoA + diphosphate. It participates in cofactor biosynthesis; coenzyme A biosynthesis; CoA from (R)-pantothenate: step 4/5. Its function is as follows. Reversibly transfers an adenylyl group from ATP to 4'-phosphopantetheine, yielding dephospho-CoA (dPCoA) and pyrophosphate. This Geotalea daltonii (strain DSM 22248 / JCM 15807 / FRC-32) (Geobacter daltonii) protein is Phosphopantetheine adenylyltransferase.